Reading from the N-terminus, the 103-residue chain is Histone H4 (103 aa).

Residues 1–14 (MSGRGKGGKGLGKG) are compositionally biased toward gly residues. Positions 1 to 20 (MSGRGKGGKGLGKGGAKRHR) are disordered. Lysine 6 carries the post-translational modification N6-acetyl-N6-methyllysine; alternate. N6-methyllysine; alternate is present on residues lysine 6, lysine 9, and lysine 13. At lysine 13 the chain carries N6-acetyl-N6-methyllysine; alternate. A DNA-binding region spans residues 17–21 (KRHRK). Lysine 92 carries the post-translational modification N6-glutaryllysine.

Belongs to the histone H4 family. In terms of assembly, the nucleosome is a histone octamer containing two molecules each of H2A, H2B, H3 and H4 assembled in one H3-H4 heterotetramer and two H2A-H2B heterodimers. The octamer wraps approximately 147 bp of DNA. In terms of processing, glutarylation at Lys-92 (H4K91glu) destabilizes nucleosomes by promoting dissociation of the H2A-H2B dimers from nucleosomes.

Its subcellular location is the nucleus. It localises to the chromosome. In terms of biological role, core component of nucleosome. Nucleosomes wrap and compact DNA into chromatin, limiting DNA accessibility to the cellular machineries which require DNA as a template. Histones thereby play a central role in transcription regulation, DNA repair, DNA replication and chromosomal stability. DNA accessibility is regulated via a complex set of post-translational modifications of histones, also called histone code, and nucleosome remodeling. The polypeptide is Histone H4 (HHF1) (Mycosarcoma maydis (Corn smut fungus)).